The sequence spans 227 residues: Ferritin light chain (227 aa).

The signal sequence occupies residues 1–19 (MKFFVALALFACLGSLALA). A disulfide bridge links Cys25 with Cys44. The region spanning 48–208 (FAGIDHIEPE…GYANDLAKLM (161 aa)) is the Ferritin-like diiron domain.

It belongs to the ferritin family. As to quaternary structure, oligomer of 12 light (L) chains and 12 heavy (H) chains; L and H chains are disulfide-linked. The functional molecule forms a roughly spherical shell with a diameter of 12 nm and contains a central cavity into which the insoluble ferric iron core is deposited. Expressed in hemolymph, gut, ovaries and to a lesser extent in testes (at protein level). Expressed in the head (at protein level).

The protein localises to the golgi apparatus. The protein resides in the secreted. Stores iron in a soluble, non-toxic, readily available form. Important for iron homeostasis. Iron is taken up in the ferrous form and deposited as ferric hydroxides after oxidation. Ferritin is composed of a heavy (H) chain which is responsible for the oxidation and uptake of ferrous iron, and a light (L) chain which facilitates the nucleation of the ferrihydrite iron core. Required for dietary iron absorption in the midgut. Involved in tissue iron detoxification by exporting excess iron. Plays a role in the maintenance of circadian rhythms. Required for embryo and larval development. The sequence is that of Ferritin light chain from Drosophila melanogaster (Fruit fly).